We begin with the raw amino-acid sequence, 48 residues long: Piguamerin (48 aa).

5 disulfides stabilise this stretch: Cys-3–Cys-14, Cys-8–Cys-19, Cys-21–Cys-41, Cys-26–Cys-45, and Cys-30–Cys-47. One can recognise an Antistasin-like domain in the interval 19–47; that stretch reads CVCVIGQCRKYCPNGFKKDENGCTFPCTC.

This sequence belongs to the protease inhibitor I15 (antistasin) family.

It localises to the secreted. Functionally, inhibits plasma and tissue kallikrein, and trypsin. May be involved in leech hematophagia. The chain is Piguamerin from Hirudo nipponia (Korean blood-sucking leech).